The following is a 993-amino-acid chain: Importin subunit beta-5 (993 aa).

An Importin N-terminal domain is found at 24 to 100 (AELGLRDLEK…RETLLHLLVS (77 aa)).

Its subcellular location is the nucleus. Functionally, required for nuclear protein import and mediates docking of import substrate to distinct nucleoporins. Serves a receptor for nuclear localization signals. Mediates the nuclear import of TATA-binding protein (TBP) and of histones H2A and H2B. The sequence is that of Importin subunit beta-5 (kap114) from Schizosaccharomyces pombe (strain 972 / ATCC 24843) (Fission yeast).